A 140-amino-acid polypeptide reads, in one-letter code: Nucleoside diphosphate kinase (140 aa).

Lysine 11, phenylalanine 59, arginine 87, threonine 93, arginine 104, and asparagine 114 together coordinate ATP. The active-site Pros-phosphohistidine intermediate is histidine 117.

It belongs to the NDK family. Homotetramer. It depends on Mg(2+) as a cofactor.

The protein resides in the cytoplasm. It carries out the reaction a 2'-deoxyribonucleoside 5'-diphosphate + ATP = a 2'-deoxyribonucleoside 5'-triphosphate + ADP. The enzyme catalyses a ribonucleoside 5'-diphosphate + ATP = a ribonucleoside 5'-triphosphate + ADP. Functionally, major role in the synthesis of nucleoside triphosphates other than ATP. The ATP gamma phosphate is transferred to the NDP beta phosphate via a ping-pong mechanism, using a phosphorylated active-site intermediate. The sequence is that of Nucleoside diphosphate kinase from Bradyrhizobium sp. (strain BTAi1 / ATCC BAA-1182).